The following is a 171-amino-acid chain: MLDLSYSLERVLQEDPAARNKWEVLLLYPGIHALLCYRLAHALHKRRFYFIARALSQLARFITGIEIHPGAKIGRGLFIDHGMGVVIGETTEIGDDVTIYHGVTLGGTGKFKGKRHPTLGNRVVVGAGAKVLGAICVGDDVRIGANAVVLSDLPTGSTAVGAKAKTITKDR.

Belongs to the transferase hexapeptide repeat family.

The protein localises to the cytoplasm. The enzyme catalyses L-serine + acetyl-CoA = O-acetyl-L-serine + CoA. It participates in amino-acid biosynthesis; L-cysteine biosynthesis; L-cysteine from L-serine: step 1/2. In Helicobacter pylori (strain J99 / ATCC 700824) (Campylobacter pylori J99), this protein is Serine acetyltransferase (cysE).